The sequence spans 332 residues: Solute carrier family 25 member 16 (332 aa).

Solcar repeat units lie at residues 34–120 (FYWL…YKTF), 128–216 (SGHV…LKSV), and 238–328 (LKTH…MKQF). 6 consecutive transmembrane segments (helical) span residues 37–57 (LRSFLAGGIAGCCAKTTVAPL), 88–108 (GYLGLYKGNGAMMIRIFPYGA), 134–154 (LMAGSMAGMTAVICTYPLDVV), 191–211 (GLMPTILGMAPYAGVSFFTFG), 244–264 (LLCGGVAGAIAQTISYPFDVT), and 299–319 (GLYRGLSLNYIRCIPSQAVAF).

Belongs to the mitochondrial carrier (TC 2.A.29) family.

The protein localises to the mitochondrion inner membrane. Its function is as follows. May be involved in the transport of coenzyme A in the mitochondrial matrix. Very little is known about the physiological function of this carrier. The sequence is that of Solute carrier family 25 member 16 from Mus musculus (Mouse).